Here is a 342-residue protein sequence, read N- to C-terminus: Galactose mutarotase (342 aa).

Serine 14 is subject to Phosphoserine. Beta-D-galactose contacts are provided by residues 81–82 (NR), histidine 107, 176–178 (HSY), aspartate 243, glutamine 279, and glutamate 307. Catalysis depends on histidine 176, which acts as the Proton donor. Glutamate 307 serves as the catalytic Proton acceptor.

This sequence belongs to the aldose epimerase family. As to quaternary structure, monomer.

It localises to the cytoplasm. It carries out the reaction alpha-D-galactose = beta-D-galactose. It catalyses the reaction alpha-D-glucose = beta-D-glucose. It functions in the pathway carbohydrate metabolism; hexose metabolism. Its pathway is carbohydrate metabolism; galactose metabolism. Functionally, mutarotase that catalyzes the interconversion of beta-D-galactose and alpha-D-galactose during galactose metabolism. Beta-D-galactose is metabolized in the liver into glucose 1-phosphate, the primary metabolic fuel, by the action of four enzymes that constitute the Leloir pathway: GALM, GALK1 (galactokinase), GALT (galactose-1-phosphate uridylyltransferase) and GALE (UDP-galactose-4'-epimerase). Involved in the maintenance of the equilibrium between the beta- and alpha-anomers of galactose, therefore ensuring a sufficient supply of the alpha-anomer for GALK1. Also active on D-glucose although shows a preference for galactose over glucose. In Mus musculus (Mouse), this protein is Galactose mutarotase.